Reading from the N-terminus, the 418-residue chain is UDP-N-acetylglucosamine 1-carboxyvinyltransferase (418 aa).

K23 to N24 serves as a coordination point for phosphoenolpyruvate. R92 contacts UDP-N-acetyl-alpha-D-glucosamine. C116 (proton donor) is an active-site residue. C116 is modified (2-(S-cysteinyl)pyruvic acid O-phosphothioketal). UDP-N-acetyl-alpha-D-glucosamine-binding positions include R121 to L125, K161 to V164, D306, and I328.

Belongs to the EPSP synthase family. MurA subfamily.

It localises to the cytoplasm. The catalysed reaction is phosphoenolpyruvate + UDP-N-acetyl-alpha-D-glucosamine = UDP-N-acetyl-3-O-(1-carboxyvinyl)-alpha-D-glucosamine + phosphate. It participates in cell wall biogenesis; peptidoglycan biosynthesis. Cell wall formation. Adds enolpyruvyl to UDP-N-acetylglucosamine. This chain is UDP-N-acetylglucosamine 1-carboxyvinyltransferase, found in Vibrio parahaemolyticus serotype O3:K6 (strain RIMD 2210633).